Here is a 290-residue protein sequence, read N- to C-terminus: Virginiamycin B lyase (290 aa).

His-226 is a substrate binding site. A Mg(2+)-binding site is contributed by Glu-265. Catalysis depends on His-267, which acts as the Proton acceptor. Glu-282 lines the Mg(2+) pocket.

The protein belongs to the Vgb family. As to quaternary structure, monomer. Mg(2+) serves as cofactor.

Its function is as follows. Inactivates the type B streptogramin antibiotics by linearizing the lactone ring at the ester linkage, generating a free phenylglycine carboxylate and converting the threonyl moiety into 2-amino-butenoic acid. The polypeptide is Virginiamycin B lyase (Mycolicibacterium vanbaalenii (strain DSM 7251 / JCM 13017 / BCRC 16820 / KCTC 9966 / NRRL B-24157 / PYR-1) (Mycobacterium vanbaalenii)).